Here is a 350-residue protein sequence, read N- to C-terminus: Protein TRIGALACTOSYLDIACYLGLYCEROL 1, chloroplastic (350 aa).

The tract at residues 67–86 (SMSMLEEETSTENNAPSQEA) is disordered. The chain crosses the membrane as a helical span at residues 98 to 117 (YIWRGLSVPIIAGQVVLRIL). The Stromal portion of the chain corresponds to 118–136 (KGKIHWRNTLQQLERTGPK). A helical membrane pass occupies residues 137–157 (SLGVCLLTSTFVGMAFTIQFV). At 158-168 (REFTRLGLNRS) the chain is on the chloroplast intermembrane side. A helical transmembrane segment spans residues 169 to 189 (IGGVLALAFSRELSPVITSIV). Residues 190–229 (VAGRMGSAFAAELGTMQVSEQTDTLRVLGADPIDYLITPR) lie on the Stromal side of the membrane. Residues 230-250 (VIASCLALPFLTLMCFTVGMA) traverse the membrane as a helical segment. Over 251 to 288 (SSALLSDAVYGISINIIMDSAHRALRPWDIVSAMIKSQ) the chain is Chloroplast intermembrane. A helical membrane pass occupies residues 289 to 309 (VFGAIISVISCSWGVTTTGGA). Residues 310 to 318 (KGVGESTTS) lie on the Stromal side of the membrane. Residues 319-339 (AVVMSLVGIFIADFVLSSFFF) form a helical membrane-spanning segment. Residues 340 to 350 (QGAGDSLKNCV) are Chloroplast intermembrane-facing.

This sequence belongs to the MlaE permease family. In terms of assembly, permease subunit of the TGD complex, a lipid translocator at the inner chloroplast envelope membrane made of TGD1, TGD2 and TGD3. Interacts with TGD2 and TGD3 with an overall subunit stoichiometry of 2 TGD1, 2 TGD3 and 8 to 12 TGD2. Interacts with TGD5. In terms of tissue distribution, high levels in green tissues, but low levels in nongreen tissues such as roots.

The protein resides in the plastid. Its subcellular location is the chloroplast inner membrane. In terms of biological role, required during embryogenesis. Permease involved in lipid transfer from the endoplasmic reticulum (ER) to plastids, and necessary for thylakoids formation. In Arabidopsis thaliana (Mouse-ear cress), this protein is Protein TRIGALACTOSYLDIACYLGLYCEROL 1, chloroplastic.